Reading from the N-terminus, the 466-residue chain is Ribulose bisphosphate carboxylase large chain (466 aa).

At K5 the chain carries N6,N6,N6-trimethyllysine. 2 residues coordinate substrate: N114 and T164. Residue K166 is the Proton acceptor of the active site. A substrate-binding site is contributed by K168. Positions 192, 194, and 195 each coordinate Mg(2+). Position 192 is an N6-carboxylysine (K192). H285 (proton acceptor) is an active-site residue. Positions 286, 318, and 370 each coordinate substrate.

It belongs to the RuBisCO large chain family. Type I subfamily. As to quaternary structure, heterohexadecamer of 8 large chains and 8 small chains; disulfide-linked. The disulfide link is formed within the large subunit homodimers. Requires Mg(2+) as cofactor. In terms of processing, the disulfide bond which can form in the large chain dimeric partners within the hexadecamer appears to be associated with oxidative stress and protein turnover.

It is found in the plastid. The protein resides in the chloroplast. It carries out the reaction 2 (2R)-3-phosphoglycerate + 2 H(+) = D-ribulose 1,5-bisphosphate + CO2 + H2O. The enzyme catalyses D-ribulose 1,5-bisphosphate + O2 = 2-phosphoglycolate + (2R)-3-phosphoglycerate + 2 H(+). In terms of biological role, ruBisCO catalyzes two reactions: the carboxylation of D-ribulose 1,5-bisphosphate, the primary event in carbon dioxide fixation, as well as the oxidative fragmentation of the pentose substrate in the photorespiration process. Both reactions occur simultaneously and in competition at the same active site. This Tropaeolum majus (Common nasturtium) protein is Ribulose bisphosphate carboxylase large chain.